Reading from the N-terminus, the 429-residue chain is Dual-specificity RNA methyltransferase RlmN (429 aa).

Residues Met-1–Pro-23 are disordered. The active-site Proton acceptor is Glu-128. Residues Asp-134–Asp-397 form the Radical SAM core domain. A disulfide bridge connects residues Cys-141 and Cys-402. Residues Cys-148, Cys-152, and Cys-155 each coordinate [4Fe-4S] cluster. S-adenosyl-L-methionine contacts are provided by residues Gly-226–Glu-227, Ser-258, Ser-280–His-282, and Asn-359. Cys-402 serves as the catalytic S-methylcysteine intermediate.

The protein belongs to the radical SAM superfamily. RlmN family. It depends on [4Fe-4S] cluster as a cofactor.

Its subcellular location is the cytoplasm. It catalyses the reaction adenosine(2503) in 23S rRNA + 2 reduced [2Fe-2S]-[ferredoxin] + 2 S-adenosyl-L-methionine = 2-methyladenosine(2503) in 23S rRNA + 5'-deoxyadenosine + L-methionine + 2 oxidized [2Fe-2S]-[ferredoxin] + S-adenosyl-L-homocysteine. It carries out the reaction adenosine(37) in tRNA + 2 reduced [2Fe-2S]-[ferredoxin] + 2 S-adenosyl-L-methionine = 2-methyladenosine(37) in tRNA + 5'-deoxyadenosine + L-methionine + 2 oxidized [2Fe-2S]-[ferredoxin] + S-adenosyl-L-homocysteine. Its function is as follows. Specifically methylates position 2 of adenine 2503 in 23S rRNA and position 2 of adenine 37 in tRNAs. m2A2503 modification seems to play a crucial role in the proofreading step occurring at the peptidyl transferase center and thus would serve to optimize ribosomal fidelity. The polypeptide is Dual-specificity RNA methyltransferase RlmN (Novosphingobium aromaticivorans (strain ATCC 700278 / DSM 12444 / CCUG 56034 / CIP 105152 / NBRC 16084 / F199)).